A 341-amino-acid polypeptide reads, in one-letter code: GTPase Obg (341 aa).

The 159-residue stretch at 1-159 (MKFLDQAKVY…RTLWLRLKLI (159 aa)) folds into the Obg domain. The 168-residue stretch at 160–327 (ADAGLIGLPN…MLRAGAHMIE (168 aa)) folds into the OBG-type G domain. GTP contacts are provided by residues 166 to 173 (GLPNAGKS), 191 to 195 (FTTLY), 212 to 215 (DIPG), 279 to 282 (SQID), and 308 to 310 (SAV). Residues Ser173 and Thr193 each coordinate Mg(2+).

Belongs to the TRAFAC class OBG-HflX-like GTPase superfamily. OBG GTPase family. As to quaternary structure, monomer. The cofactor is Mg(2+).

It localises to the cytoplasm. Its function is as follows. An essential GTPase which binds GTP, GDP and possibly (p)ppGpp with moderate affinity, with high nucleotide exchange rates and a fairly low GTP hydrolysis rate. Plays a role in control of the cell cycle, stress response, ribosome biogenesis and in those bacteria that undergo differentiation, in morphogenesis control. The polypeptide is GTPase Obg (Bartonella quintana (strain Toulouse) (Rochalimaea quintana)).